Reading from the N-terminus, the 182-residue chain is Large ribosomal subunit protein uL5m (182 aa).

This sequence belongs to the universal ribosomal protein uL5 family.

It localises to the mitochondrion. The polypeptide is Large ribosomal subunit protein uL5m (RPL5) (Reclinomonas americana).